We begin with the raw amino-acid sequence, 461 residues long: UDP-N-acetylmuramate--L-alanine ligase (461 aa).

111 to 117 serves as a coordination point for ATP; that stretch reads GAHGKTT.

It belongs to the MurCDEF family.

The protein localises to the cytoplasm. It carries out the reaction UDP-N-acetyl-alpha-D-muramate + L-alanine + ATP = UDP-N-acetyl-alpha-D-muramoyl-L-alanine + ADP + phosphate + H(+). The protein operates within cell wall biogenesis; peptidoglycan biosynthesis. In terms of biological role, cell wall formation. The sequence is that of UDP-N-acetylmuramate--L-alanine ligase from Pelotomaculum thermopropionicum (strain DSM 13744 / JCM 10971 / SI).